Reading from the N-terminus, the 80-residue chain is Calmodulin (80 aa).

EF-hand domains are found at residues 12–47 and 48–80; these read DSEE…LGEK and LTDE…MTSK. Ca(2+) contacts are provided by Asp-25, Asp-27, Asn-29, Glu-36, Asp-61, Asp-63, Asp-65, Gln-67, and Glu-72.

It belongs to the calmodulin family.

Functionally, calmodulin mediates the control of a large number of enzymes, ion channels and other proteins by Ca(2+). Among the enzymes to be stimulated by the calmodulin-Ca(2+) complex are a number of protein kinases and phosphatases. This Strongylocentrotus purpuratus (Purple sea urchin) protein is Calmodulin.